Here is a 143-residue protein sequence, read N- to C-terminus: uncharacterized protein (143 aa).

The transit peptide at 1–38 directs the protein to the mitochondrion; it reads MKYWKYLSQLTIRRPLTYNNALLYRNRFPSILTWKRSA.

Its subcellular location is the mitochondrion. This is an uncharacterized protein from Schizosaccharomyces pombe (strain 972 / ATCC 24843) (Fission yeast).